The following is a 911-amino-acid chain: Isoleucine--tRNA ligase (911 aa).

Residues 57-67 (PYANGHIHIGH) carry the 'HIGH' region motif. Glu-564 provides a ligand contact to L-isoleucyl-5'-AMP. Positions 605 to 609 (KMSKS) match the 'KMSKS' region motif. Position 608 (Lys-608) interacts with ATP. 4 residues coordinate Zn(2+): Cys-887, Cys-890, Cys-902, and Cys-905.

This sequence belongs to the class-I aminoacyl-tRNA synthetase family. IleS type 1 subfamily. Monomer. The cofactor is Zn(2+).

It is found in the cytoplasm. It carries out the reaction tRNA(Ile) + L-isoleucine + ATP = L-isoleucyl-tRNA(Ile) + AMP + diphosphate. Catalyzes the attachment of isoleucine to tRNA(Ile). As IleRS can inadvertently accommodate and process structurally similar amino acids such as valine, to avoid such errors it has two additional distinct tRNA(Ile)-dependent editing activities. One activity is designated as 'pretransfer' editing and involves the hydrolysis of activated Val-AMP. The other activity is designated 'posttransfer' editing and involves deacylation of mischarged Val-tRNA(Ile). This Nautilia profundicola (strain ATCC BAA-1463 / DSM 18972 / AmH) protein is Isoleucine--tRNA ligase.